The sequence spans 210 residues: Large ribosomal subunit protein uL3 (210 aa).

A disordered region spans residues 131-165; the sequence is GPMSHGSKYHRRVGSMGATTDPGRTFKGKKMPGRM.

Belongs to the universal ribosomal protein uL3 family. Part of the 50S ribosomal subunit. Forms a cluster with proteins L14 and L19.

Its function is as follows. One of the primary rRNA binding proteins, it binds directly near the 3'-end of the 23S rRNA, where it nucleates assembly of the 50S subunit. This Caldanaerobacter subterraneus subsp. tengcongensis (strain DSM 15242 / JCM 11007 / NBRC 100824 / MB4) (Thermoanaerobacter tengcongensis) protein is Large ribosomal subunit protein uL3.